Reading from the N-terminus, the 208-residue chain is UPF0637 protein Bcer98_2662 (208 aa).

It belongs to the UPF0637 family.

The chain is UPF0637 protein Bcer98_2662 from Bacillus cytotoxicus (strain DSM 22905 / CIP 110041 / 391-98 / NVH 391-98).